Here is a 544-residue protein sequence, read N- to C-terminus: Calcium-dependent protein kinase 6 (544 aa).

The segment at methionine 1–glutamine 47 is disordered. Glycine 2 is lipidated: N-myristoyl glycine. The segment covering serine 8 to serine 25 has biased composition (basic and acidic residues). The span at lysine 26 to threonine 40 shows a compositional bias: low complexity. Positions tyrosine 85–isoleucine 343 constitute a Protein kinase domain. ATP contacts are provided by residues leucine 91–threonine 99 and lysine 114. The active-site Proton acceptor is aspartate 209. Position 249 is a phosphoserine (serine 249). The segment at alanine 349 to isoleucine 379 is autoinhibitory domain. 4 consecutive EF-hand domains span residues glutamate 386–threonine 421, leucine 422–leucine 457, glutamate 458–threonine 493, and leucine 497–glycine 527. Aspartate 399, aspartate 401, serine 403, glutamate 410, aspartate 435, aspartate 437, serine 439, threonine 441, glutamate 446, aspartate 471, aspartate 473, serine 475, tyrosine 477, glutamate 482, aspartate 505, aspartate 507, aspartate 509, arginine 511, and glutamate 516 together coordinate Ca(2+).

This sequence belongs to the protein kinase superfamily. Ser/Thr protein kinase family. CDPK subfamily. In terms of assembly, interacts with SLAC1. Interacts with FD. Expressed in both guard cells and mesophyll cells. Expressed in the shoot apical meristem.

Its subcellular location is the cell membrane. It is found in the nucleus. It catalyses the reaction L-seryl-[protein] + ATP = O-phospho-L-seryl-[protein] + ADP + H(+). It carries out the reaction L-threonyl-[protein] + ATP = O-phospho-L-threonyl-[protein] + ADP + H(+). Its activity is regulated as follows. Activated by calcium. Autophosphorylation may play an important role in the regulation of the kinase activity. In terms of biological role, may play a role in signal transduction pathways that involve calcium as a second messenger. Functions in abscisic acid (ABA) regulation of guard cell S-type anion- and Ca(2+)-permeable channels and stomatal closure. Phosphorylates FD. This is Calcium-dependent protein kinase 6 (CPK6) from Arabidopsis thaliana (Mouse-ear cress).